The sequence spans 210 residues: Oxygen-insensitive NADPH nitroreductase (210 aa).

150 to 155 serves as a coordination point for NADP(+); sequence GVSLMG.

It belongs to the nitroreductase family.

In terms of biological role, reduction of a variety of nitroaromatic compounds using NADPH as source of reducing equivalents; two electrons are transferred. The sequence is that of Oxygen-insensitive NADPH nitroreductase (rdxA) from Helicobacter acinonychis (strain Sheeba).